The chain runs to 376 residues: RING-H2 finger protein ATL46 (376 aa).

A helical membrane pass occupies residues 45–65 (VLFVIVILAVLFFISGLLHLL). An RING-type; atypical zinc finger spans residues 143 to 185 (CAVCLCEFSEKDKLRLLPMCSHAFHLNCIDTWLQSNSTCPLCR). Basic and acidic residues-rich tracts occupy residues 296–305 (RLKPQDKESE) and 358–376 (DLPK…NDGR). Disordered regions lie at residues 296–320 (RLKP…KINT) and 341–376 (FSSD…NDGR).

Belongs to the RING-type zinc finger family. ATL subfamily.

The protein localises to the membrane. The catalysed reaction is S-ubiquitinyl-[E2 ubiquitin-conjugating enzyme]-L-cysteine + [acceptor protein]-L-lysine = [E2 ubiquitin-conjugating enzyme]-L-cysteine + N(6)-ubiquitinyl-[acceptor protein]-L-lysine.. The protein operates within protein modification; protein ubiquitination. The protein is RING-H2 finger protein ATL46 (ATL46) of Arabidopsis thaliana (Mouse-ear cress).